A 318-amino-acid chain; its full sequence is Methionyl-tRNA formyltransferase (318 aa).

112-115 (SILP) serves as a coordination point for (6S)-5,6,7,8-tetrahydrofolate.

The protein belongs to the Fmt family.

It catalyses the reaction L-methionyl-tRNA(fMet) + (6R)-10-formyltetrahydrofolate = N-formyl-L-methionyl-tRNA(fMet) + (6S)-5,6,7,8-tetrahydrofolate + H(+). Its function is as follows. Attaches a formyl group to the free amino group of methionyl-tRNA(fMet). The formyl group appears to play a dual role in the initiator identity of N-formylmethionyl-tRNA by promoting its recognition by IF2 and preventing the misappropriation of this tRNA by the elongation apparatus. In Shewanella baltica (strain OS185), this protein is Methionyl-tRNA formyltransferase.